The following is a 119-amino-acid chain: Non-structural protein 3b (119 aa).

The region spanning 2–83 is the DRBM domain; that stretch reads DYVSLLNQFW…ARLICEQLQA (82 aa).

As to quaternary structure, interacts with host RUNX1 isoform b.

The protein resides in the host nucleus. It is found in the host nucleolus. Its subcellular location is the host mitochondrion. Functionally, induces host cell G0/G1 arrest and apoptosis. This is Non-structural protein 3b from Tylonycteris pachypus (Lesser bamboo bat).